Here is a 163-residue protein sequence, read N- to C-terminus: Peptidyl-prolyl cis-trans isomerase FKBP15-2 (163 aa).

An N-terminal signal peptide occupies residues 1–25 (MASKMSLRYSLFLIFFSLISLQGFA). One can recognise a PPIase FKBP-type domain in the interval 52-140 (GDTIKVHYRG…IFDTELIAVN (89 aa)). The segment at 142–163 (KPAGGEEYGGDEDDEGYGNDEL) is disordered. Residues 149-163 (YGGDEDDEGYGNDEL) are compositionally biased toward acidic residues. The Prevents secretion from ER signature appears at 160–163 (NDEL).

This sequence belongs to the FKBP-type PPIase family.

It is found in the endoplasmic reticulum lumen. The enzyme catalyses [protein]-peptidylproline (omega=180) = [protein]-peptidylproline (omega=0). Its function is as follows. PPIases accelerate the folding of proteins. It catalyzes the cis-trans isomerization of proline imidic peptide bonds in oligopeptides. The protein is Peptidyl-prolyl cis-trans isomerase FKBP15-2 (FKBP15-2) of Arabidopsis thaliana (Mouse-ear cress).